The primary structure comprises 302 residues: uncharacterized protein (302 aa).

Residue Glu47 is part of the active site.

It belongs to the PhzF family.

This is an uncharacterized protein from Mesorhizobium japonicum (strain LMG 29417 / CECT 9101 / MAFF 303099) (Mesorhizobium loti (strain MAFF 303099)).